Reading from the N-terminus, the 366-residue chain is Protein FAM110B (366 aa).

3 disordered regions span residues S127–T150, K163–R182, and I214–Q253. S234 and S297 each carry phosphoserine. The segment at D313–R333 is disordered. Residues S322–N331 show a composition bias toward basic and acidic residues.

This sequence belongs to the FAM110 family.

It is found in the cytoplasm. Its subcellular location is the cytoskeleton. The protein localises to the microtubule organizing center. It localises to the centrosome. This is Protein FAM110B (Fam110b) from Rattus norvegicus (Rat).